The following is an 82-amino-acid chain: Small ribosomal subunit protein uS17 (82 aa).

Belongs to the universal ribosomal protein uS17 family. Part of the 30S ribosomal subunit.

One of the primary rRNA binding proteins, it binds specifically to the 5'-end of 16S ribosomal RNA. The sequence is that of Small ribosomal subunit protein uS17 from Sulfurimonas denitrificans (strain ATCC 33889 / DSM 1251) (Thiomicrospira denitrificans (strain ATCC 33889 / DSM 1251)).